The chain runs to 296 residues: Thiamine-monophosphate kinase (296 aa).

Mg(2+) is bound by residues aspartate 32, threonine 46, and aspartate 48. Aspartate 55 contacts substrate. The Mg(2+) site is built by aspartate 76 and aspartate 121. Residues 120–121 (GD) and arginine 144 contribute to the ATP site. Aspartate 206 provides a ligand contact to Mg(2+). Serine 208 contacts ATP. Residue aspartate 209 participates in Mg(2+) binding. Tyrosine 293 is a binding site for substrate.

The protein belongs to the thiamine-monophosphate kinase family.

The enzyme catalyses thiamine phosphate + ATP = thiamine diphosphate + ADP. It functions in the pathway cofactor biosynthesis; thiamine diphosphate biosynthesis; thiamine diphosphate from thiamine phosphate: step 1/1. In terms of biological role, catalyzes the ATP-dependent phosphorylation of thiamine-monophosphate (TMP) to form thiamine-pyrophosphate (TPP), the active form of vitamin B1. This Archaeoglobus fulgidus (strain ATCC 49558 / DSM 4304 / JCM 9628 / NBRC 100126 / VC-16) protein is Thiamine-monophosphate kinase.